We begin with the raw amino-acid sequence, 417 residues long: Putative F-box protein At3g58950 (417 aa).

The 53-residue stretch at 1 to 53 (MDLFSSLPDEVLCHILSFLTTKEAALASVVSKRWRNQFALVPNLDIDEEGKRE) folds into the F-box domain.

This Arabidopsis thaliana (Mouse-ear cress) protein is Putative F-box protein At3g58950.